The primary structure comprises 42 residues: Tachystatin-B1 (42 aa).

Intrachain disulfides connect Cys-4–Cys-20, Cys-11–Cys-25, and Cys-19–Cys-37.

Granular hemocytes, small secretory granules.

Its subcellular location is the secreted. In terms of biological role, exhibits stronger antimicrobial activity against the Gram-positive bacteria (S.aureus (IC(50) is 7.4 ug/ml)) and fungi (C.albicans (IC(50) is 3.0 ug/ml) and P.pastoris (IC(50) is 0.1 ug/ml)) than Gram-negative bacteria (E.coli no inhibition at 100 ug/ml). Binds to chitin (4.3 uM are required to obtain 50% of binding). Does not cause hemolysis on sheep erythrocytes. Has no blocking activity on the P-type calcium channel. The sequence is that of Tachystatin-B1 from Tachypleus tridentatus (Japanese horseshoe crab).